A 180-amino-acid polypeptide reads, in one-letter code: Type-1 fimbrial protein subunit (180 aa).

Residues 1–22 (MKKVLLPLAALVLSATASNAMA) form the signal peptide. Residues C38 and C78 are joined by a disulfide bond.

Belongs to the fimbrial protein family.

It localises to the fimbrium. Functionally, fimbriae (also called pili), polar filaments radiating from the surface of the bacterium to a length of 0.5-1.5 micrometers and numbering 100-300 per cell, enable bacteria to colonize the epithelium of specific host organs. This chain is Type-1 fimbrial protein subunit (fimA), found in Serratia marcescens.